Reading from the N-terminus, the 264-residue chain is Thymidylate synthase (264 aa).

DUMP is bound at residue arginine 21. A (6R)-5,10-methylene-5,6,7,8-tetrahydrofolate-binding site is contributed by histidine 51. Residue 126-127 coordinates dUMP; that stretch reads RR. The active-site Nucleophile is the cysteine 146. DUMP-binding positions include 166–169, asparagine 177, and 207–209; these read RSAD and HIY. Aspartate 169 serves as a coordination point for (6R)-5,10-methylene-5,6,7,8-tetrahydrofolate. Residue alanine 263 participates in (6R)-5,10-methylene-5,6,7,8-tetrahydrofolate binding.

Belongs to the thymidylate synthase family. Bacterial-type ThyA subfamily. Homodimer.

It localises to the cytoplasm. It catalyses the reaction dUMP + (6R)-5,10-methylene-5,6,7,8-tetrahydrofolate = 7,8-dihydrofolate + dTMP. Its pathway is pyrimidine metabolism; dTTP biosynthesis. In terms of biological role, catalyzes the reductive methylation of 2'-deoxyuridine-5'-monophosphate (dUMP) to 2'-deoxythymidine-5'-monophosphate (dTMP) while utilizing 5,10-methylenetetrahydrofolate (mTHF) as the methyl donor and reductant in the reaction, yielding dihydrofolate (DHF) as a by-product. This enzymatic reaction provides an intracellular de novo source of dTMP, an essential precursor for DNA biosynthesis. The chain is Thymidylate synthase from Brucella anthropi (strain ATCC 49188 / DSM 6882 / CCUG 24695 / JCM 21032 / LMG 3331 / NBRC 15819 / NCTC 12168 / Alc 37) (Ochrobactrum anthropi).